Here is a 372-residue protein sequence, read N- to C-terminus: Putative glutamate--cysteine ligase 2 (372 aa).

Belongs to the glutamate--cysteine ligase type 2 family. YbdK subfamily. Homodimer.

The enzyme catalyses L-cysteine + L-glutamate + ATP = gamma-L-glutamyl-L-cysteine + ADP + phosphate + H(+). Functionally, ATP-dependent carboxylate-amine ligase which exhibits weak glutamate--cysteine ligase activity. In Citrobacter koseri (strain ATCC BAA-895 / CDC 4225-83 / SGSC4696), this protein is Putative glutamate--cysteine ligase 2.